Consider the following 82-residue polypeptide: Apovitellenin-1 (82 aa).

It belongs to the apovitellenin family. In terms of assembly, monomer. Found in egg yolk and in plasma.

Functionally, protein component of the very low density lipoprotein (VLDL) of egg-laying females. Potent lipoprotein lipase inhibitor, preventing the loss of triglycerides from VLDL on their way from the liver to the growing oocytes. This chain is Apovitellenin-1, found in Anas platyrhynchos (Mallard).